Here is a 316-residue protein sequence, read N- to C-terminus: Pantothenate kinase (316 aa).

95-102 (GSVAVGKS) provides a ligand contact to ATP.

Belongs to the prokaryotic pantothenate kinase family.

The protein resides in the cytoplasm. The catalysed reaction is (R)-pantothenate + ATP = (R)-4'-phosphopantothenate + ADP + H(+). It participates in cofactor biosynthesis; coenzyme A biosynthesis; CoA from (R)-pantothenate: step 1/5. The chain is Pantothenate kinase from Hamiltonella defensa subsp. Acyrthosiphon pisum (strain 5AT).